Reading from the N-terminus, the 361-residue chain is MNGSRALHLSAWLLLCLLCSAAVARDDSCETCRKLVDRFHKGLENTAKKNFGGGNTAWEEKTLSKYESSEIRLVEIIENLCDSSDFECNHMVEEHEEQIEKWWFKMKKKYPDLLKWFCIETIKVCCPPGTYGPDCLACLGGSERPCHGNGFCNGDGTRSGDGLCRCEAEYTGPFCLECADEYFSSERNDTYSLCTACNQACKTCDGPSNEDCKECKNGWIKDDGKCVDLNECASEESPCKDSQYCLNTEGSFLCKECDGSCLGCSGEGPENCKDCATGYVLLAEKCTDVDECDASEQVCSRENETCLNTAGSYKCTCSEGFEDKEGNCVKIMEAENTEVTDGEMGTSASDINISNTAHEDL.

Positions 1–24 (MNGSRALHLSAWLLLCLLCSAAVA) are cleaved as a signal peptide. The region spanning 134–176 (DCLACLGGSERPCHGNGFCNGDGTRSGDGLCRCEAEYTGPFCL) is the EGF-like 1 domain. 3 disulfides stabilise this stretch: Cys138–Cys152, Cys146–Cys164, and Cys166–Cys175. An N-linked (GlcNAc...) asparagine glycan is attached at Asn188. FU repeat units lie at residues 191–238 (YSLC…EESP) and 251–298 (SFLC…SEQV). The EGF-like 2; calcium-binding domain occupies 288-329 (DVDECDASEQVCSRENETCLNTAGSYKCTCSEGFEDKEGNCV). Intrachain disulfides connect Cys292–Cys306, Cys299–Cys315, and Cys317–Cys328. An N-linked (GlcNAc...) asparagine glycan is attached at Asn303. The segment at 341–361 (DGEMGTSASDINISNTAHEDL) is disordered. Positions 346–361 (TSASDINISNTAHEDL) are enriched in polar residues. N-linked (GlcNAc...) asparagine glycosylation is present at Asn352.

It belongs to the CRELD family.

The protein resides in the secreted. The protein localises to the endoplasmic reticulum. In terms of biological role, possible role in neuronal acetylcholine receptor transport. In Xenopus laevis (African clawed frog), this protein is Cysteine-rich with EGF-like domain protein 2-A (creld2-a).